The chain runs to 84 residues: Large ribosomal subunit protein bL27 (84 aa).

The disordered stretch occupies residues 1–23; sequence MAHKKGASSSRNGRESAAQRLGV.

This sequence belongs to the bacterial ribosomal protein bL27 family.

This Salinispora arenicola (strain CNS-205) protein is Large ribosomal subunit protein bL27.